Here is a 243-residue protein sequence, read N- to C-terminus: Large ribosomal subunit protein uL2 (243 aa).

The tract at residues 202-243 (HGGGRHQHVGQSSTVSRNAPPGAKVGSIAARKTGRAKIKDRR) is disordered. Residues 233-243 (KTGRAKIKDRR) are compositionally biased toward basic residues.

The protein belongs to the universal ribosomal protein uL2 family. In terms of assembly, part of the 50S ribosomal subunit. Forms a bridge to the 30S subunit in the 70S ribosome.

Functionally, one of the primary rRNA binding proteins. Required for association of the 30S and 50S subunits to form the 70S ribosome, for tRNA binding and peptide bond formation. It has been suggested to have peptidyltransferase activity; this is somewhat controversial. Makes several contacts with the 16S rRNA in the 70S ribosome. The polypeptide is Large ribosomal subunit protein uL2 (Cenarchaeum symbiosum (strain A)).